We begin with the raw amino-acid sequence, 322 residues long: NADH-quinone oxidoreductase subunit H (322 aa).

Helical transmembrane passes span 12 to 32, 79 to 99, 111 to 131, 151 to 171, 183 to 203, 234 to 254, 262 to 282, and 301 to 321; these read IGKALIVLVGIVGAGAFMSFI, IFILAPIIAFTAFILAFAVVP, VGLLYILAIAGLAVYAVLFAG, LSYEVFLGLSLMGIVIQTGSF, LWNVVPQFLGFITFLFAGVAV, FFVGEYIGIVLISSLIVTLFF, LPPFFWFALKTACFMVFFILL, and VCLPLTLINMLITAAVVLMNV.

This sequence belongs to the complex I subunit 1 family. In terms of assembly, NDH-1 is composed of 13 different subunits. Subunits NuoA, H, J, K, L, M, N constitute the membrane sector of the complex.

The protein resides in the cell inner membrane. The enzyme catalyses a quinone + NADH + 5 H(+)(in) = a quinol + NAD(+) + 4 H(+)(out). Its function is as follows. NDH-1 shuttles electrons from NADH, via FMN and iron-sulfur (Fe-S) centers, to quinones in the respiratory chain. The immediate electron acceptor for the enzyme in this species is believed to be ubiquinone. Couples the redox reaction to proton translocation (for every two electrons transferred, four hydrogen ions are translocated across the cytoplasmic membrane), and thus conserves the redox energy in a proton gradient. This subunit may bind ubiquinone. The polypeptide is NADH-quinone oxidoreductase subunit H (Shewanella oneidensis (strain ATCC 700550 / JCM 31522 / CIP 106686 / LMG 19005 / NCIMB 14063 / MR-1)).